Here is a 421-residue protein sequence, read N- to C-terminus: Gamma-glutamyl phosphate reductase (421 aa).

This sequence belongs to the gamma-glutamyl phosphate reductase family.

Its subcellular location is the cytoplasm. It carries out the reaction L-glutamate 5-semialdehyde + phosphate + NADP(+) = L-glutamyl 5-phosphate + NADPH + H(+). It functions in the pathway amino-acid biosynthesis; L-proline biosynthesis; L-glutamate 5-semialdehyde from L-glutamate: step 2/2. In terms of biological role, catalyzes the NADPH-dependent reduction of L-glutamate 5-phosphate into L-glutamate 5-semialdehyde and phosphate. The product spontaneously undergoes cyclization to form 1-pyrroline-5-carboxylate. The protein is Gamma-glutamyl phosphate reductase of Brucella melitensis biotype 1 (strain ATCC 23456 / CCUG 17765 / NCTC 10094 / 16M).